A 403-amino-acid chain; its full sequence is Large ribosomal subunit protein uL3 (403 aa).

The tract at residues 1-38 (MSHRKFSAPRHGSLGFLPRKRSSRHRGKVKSFPKDDSS) is disordered. Phosphoserine is present on Ser-13. Positions 18-31 (PRKRSSRHRGKVKS) are enriched in basic residues. Lys-39 participates in a covalent cross-link: Glycyl lysine isopeptide (Lys-Gly) (interchain with G-Cter in SUMO2). At Lys-136 the chain carries N6-acetyllysine. Residues Lys-224 and Lys-226 each participate in a glycyl lysine isopeptide (Lys-Gly) (interchain with G-Cter in SUMO2) cross-link. Position 245 is a tele-methylhistidine (His-245). An N6-acetyllysine; alternate mark is found at Lys-286 and Lys-294. Lys-286 is covalently cross-linked (Glycyl lysine isopeptide (Lys-Gly) (interchain with G-Cter in SUMO2); alternate). Lys-294 is covalently cross-linked (Glycyl lysine isopeptide (Lys-Gly) (interchain with G-Cter in SUMO1); alternate). Phosphoserine is present on Ser-304. Lys-366 carries the post-translational modification N6-acetyllysine; alternate. Lys-366 is covalently cross-linked (Glycyl lysine isopeptide (Lys-Gly) (interchain with G-Cter in SUMO2); alternate). Lys-373 bears the N6-acetyllysine mark. Residues Lys-386, Lys-393, and Lys-399 each participate in a glycyl lysine isopeptide (Lys-Gly) (interchain with G-Cter in SUMO2) cross-link.

Belongs to the universal ribosomal protein uL3 family. Component of the large ribosomal subunit. Interacts with DHX33. Constitutively monomethylated at His-245 by METTL18. Methylation at His-245 regulates translation elongation by slowing ribosome traversal on tyrosine codons: slower elongation provides enough time for proper folding of synthesized proteins and prevents cellular aggregation of tyrosine-rich proteins It is not required for incorporation of RPL3 into ribosomes.

It is found in the nucleus. Its subcellular location is the nucleolus. The protein localises to the cytoplasm. Its function is as follows. Component of the large ribosomal subunit. The ribosome is a large ribonucleoprotein complex responsible for the synthesis of proteins in the cell. This chain is Large ribosomal subunit protein uL3 (RPL3), found in Bos taurus (Bovine).